The chain runs to 49 residues: Putative exported peptide YydF (49 aa).

Functionally, suggested to be the precursor for an exported, modified peptide that has antimicrobial and/or signaling properties. Synthesis requires YydG and YydH; the peptide is proposed to be exported by the YydIJ transporter. In the absence of the transporter, the modified peptide activates the LiaRS two-component regulatory system, possibly by eliciting cell envelope stress. This activation can occur in trans in cocultured cells lacking either the transporter or the whole operon. In Bacillus subtilis (strain 168), this protein is Putative exported peptide YydF (yydF).